The following is a 216-amino-acid chain: Fibroblast growth factor 19 (216 aa).

An N-terminal signal peptide occupies residues 1 to 24 (MRSGCVVVHVWILAGLWLAVAGRP). 2 disulfide bridges follow: Cys-58/Cys-70 and Cys-102/Cys-120.

The protein belongs to the heparin-binding growth factors family. In terms of assembly, interacts with FGFR1, FGFR2, FGFR3 and FGFR4. Affinity between fibroblast growth factors (FGFs) and their receptors is increased by KL, KLB and heparan sulfate glycosaminoglycans that function as coreceptors. Interacts with KL; this interaction is direct. Interacts with KLB; this interaction is direct. Interacts with FGFR4 in the presence of heparin, KL or KLB. Interacts with MALRD1. As to expression, expressed in fetal brain, cartilage, retina, and adult gall bladder.

The protein resides in the secreted. Functionally, involved in the suppression of bile acid biosynthesis through down-regulation of CYP7A1 expression, following positive regulation of the JNK and ERK1/2 cascades. Stimulates glucose uptake in adipocytes. Activity requires the presence of KLB and FGFR4. This is Fibroblast growth factor 19 (FGF19) from Homo sapiens (Human).